The chain runs to 700 residues: MARKTPIERYRNIGISAHIDAGKTTTTERILFYTGVNHKLGETHDGSATMDWMEQEQERGITITSAATTAFWRGMAGNYPEHRINIIDTPGHVDFTIEVERSMRVLDGACMVYCAVGGVQPQSETVWRQANKYGVPRLAFVNKMDRTGANFFKVYDQLKTRLRANPVPIVIPIGAEDSFTGVVDLVKMKAIIWDEASQGTKFEYGDIPAELEGTANEWREKLVEAAAESSEELMNKYLETGSLDEDDINVALRQRTIAGEIQPMLCGTAFKNKGVQRMLDAVIDYLPSPADIPPVDGQDDDGNPIKRSADDAEKFSALAFKLMSDPFVGQLTFVRVYSGVLKSGDTVYNPIKGKKERIGRLLQMHANNREEIKEVLAGDIAAVVGLKDVTTGETLCDIDSHILLERMEFPEPVISQAVEPKSKADQEKMGLALSRLAQEDPSFRVRSDEESGQTIISGMGELHLEILVDRMRREFGVEANVGKPQVAYRETIRKNCDEVEGKFVKQSGGRGQYGHVVLKLEPLPPGGGYEFVDAIKGGVVPREYIPAVDKGIQETLPAGILAGYPVVDVKATLFFGSYHDVDSNENAFKMAASMAFKEGMRRASPVLLEPMMAVEVETPEDYAGTVMGDLSSRRGMVQGMDDIVGGGKTIKAEVPLAEMFGYATNLRSLTQGRATYTMEFKHYAEAPKNVADEVIAARGK.

A tr-type G domain is found at 8–290 (ERYRNIGISA…AVIDYLPSPA (283 aa)). GTP-binding positions include 17 to 24 (AHIDAGKT), 88 to 92 (DTPGH), and 142 to 145 (NKMD).

This sequence belongs to the TRAFAC class translation factor GTPase superfamily. Classic translation factor GTPase family. EF-G/EF-2 subfamily.

The protein resides in the cytoplasm. Functionally, catalyzes the GTP-dependent ribosomal translocation step during translation elongation. During this step, the ribosome changes from the pre-translocational (PRE) to the post-translocational (POST) state as the newly formed A-site-bound peptidyl-tRNA and P-site-bound deacylated tRNA move to the P and E sites, respectively. Catalyzes the coordinated movement of the two tRNA molecules, the mRNA and conformational changes in the ribosome. This chain is Elongation factor G 1, found in Bordetella bronchiseptica (strain ATCC BAA-588 / NCTC 13252 / RB50) (Alcaligenes bronchisepticus).